The following is a 1008-amino-acid chain: GGISVPGPMGPSGPRGLPGPPGPGPQGFQGPPGEPGEPGSGPMGPRGPPGPPGKNGDDGEAGKPGRPGERGPPGPQGARGLPGTAGLPGMKGHRGFSGLDGAKGDAGPAGPKGEPGSPGENGAPGQMGPRGLPGERGRPGASGPAGARGNDGAAGAAGPPGPTGPAGPPGFPGAVGAKGEAGPQGARGSEGPQGVRGEPGPPGPAGAAGPAGNPGADGQPGAKGANGAPGIAGAPGFPGRGPSGPQGPSGPGPKGNSGEPGAPGSKGDTGAKGEPGPTGIQGPPGPAGEEGKRGARGEPGPTGLPGPPGERGGPGSRGFPGADGVAGPKGPAGERGSPGPAGPKGSPGEAGRPGEAGLPGAKGLTGSPGSPGPDGKTGPPGPAGQDGRPGPPGPPGARGQAGVMGFPGPKGAAGEPGKAGERGVPGPPGAVGPAGKDGEAGAQGPPGPAGPAGERGEQGPAGPGFQGLPGPAGPPGEAGKPGEQGVPGDLGAPGPSGARGERGFPGERGVQGPPGPAGPRGAPGNDGAKGDAGAPGAPGSQGAPGLQGMPGERGAAGLPGPKGDRGDAGPKGADGAPGKDGVRGLTGPIGPPGPAGAPGDKGESGPSGPAGPTGARGAPGDRGEPGPPGPAGFAGPPGADGQPGAKGEPGDAGAKGDAGPPGPAGPTGPPGPIGNVGAPGPKGARGSAGPPGATGFPGAAGRVGPPGPSGNAGPGPPGPVGKEGGKGPRGETGPAGRPGEVGPPGPPGPGEKGSPGADGPAGAPGTPGPQGIGQRGVVGLPGQRGERGFPGLPGPSGEPGKQGPSGSSGERGPPGPVGPPGLAGPPGESGREGSPGAEGSPGRDGSPGPKGDRGETGPGPPGAPGAPGAPGPVGPAGKSGDRGETGPAGPAGPAGPAGARGPAGPQGPRGDKGETGEQGDRGIKGHRGFSGLQGPAGPPGSPGEQGPSGASGPAGPRGPPGSAGSPGKDGLNGLPGPIGPPGPRGRTGDAGPVGPPGPPGPPGPPGPP.

A disordered region spans residues 1–1008 (GGISVPGPMG…PGPPGPPGPP (1008 aa)). P18, P21, P23, P32, P35, P38, P52, P67, P73, P82, and P88 each carry 4-hydroxyproline. Basic and acidic residues predominate over residues 55–69 (NGDDGEAGKPGRPGE). K91 carries the post-translational modification 5-hydroxylysine; alternate. K91 carries O-linked (Gal...) hydroxylysine; alternate glycosylation. S97 bears the Phosphoserine mark. The span at 105–121 (DAGPAGPKGEPGSPGEN) shows a compositional bias: low complexity. A 4-hydroxyproline mark is found at P115, P118, P124, P133, P139, P160, P169, P172, P199, P202, P214, P220, P229, P235, and P238. A compositionally biased stretch (low complexity) spans 139 to 157 (PGASGPAGARGNDGAAGAA). Pro residues predominate over residues 159–171 (PPGPTGPAGPPGF). Low complexity predominate over residues 205–235 (AGAAGPAGNPGADGQPGAKGANGAPGIAGAP). A compositionally biased stretch (gly residues) spans 236–255 (GFPGRGPSGPQGPSGPGPKG). Position 254 is a 5-hydroxylysine (K254). 4-hydroxyproline is present on residues P260, P263, P275, P284, P299, P305, P314, and P320. Residues 309–318 (GERGGPGSRG) show a composition bias toward gly residues. K329 bears the 5-hydroxylysine mark. 4-hydroxyproline occurs at positions 338, 347, 353, 359, 368, 371, 380, 389, 395, 407, 416, 425, 428, 446, 463, 469, 475, 481, 487, 493, 505, 514, 523, 535, 538, 544, 550, and 559. A compositionally biased stretch (low complexity) spans 362–388 (KGLTGSPGSPGPDGKTGPPGPAGQDGR). Over residues 397–416 (ARGQAGVMGFPGPKGAAGEP) the composition is skewed to low complexity. Residues 475-484 (PGEAGKPGEQ) show a composition bias toward low complexity. Low complexity predominate over residues 519 to 547 (PRGAPGNDGAKGDAGAPGAPGSQGAPGLQ). K571 is subject to 5-hydroxylysine. 4-hydroxyproline is present on residues P577, P592, and P598. A compositionally biased stretch (low complexity) spans 604–618 (SGPSGPAGPTGARGA). Residue S607 is modified to Phosphoserine. P619, P625, P628, P637, P643, P661, P670, and P679 each carry 4-hydroxyproline. Positions 631–658 (AGFAGPPGADGQPGAKGEPGDAGAKGDA) are enriched in low complexity. Over residues 660–672 (PPGPAGPTGPPGP) the composition is skewed to pro residues. A 5-hydroxylysine modification is found at K682. Residues 687–703 (SAGPPGATGFPGAAGRV) show a composition bias toward low complexity. A 4-hydroxyproline mark is found at P691 and P697. P705 carries the 3-hydroxyproline modification. 15 positions are modified to 4-hydroxyproline: P706, P717, P738, P747, P755, P764, P781, P790, P793, P799, P814, P820, P826, P835, and P841. Residues 731 to 740 (ETGPAGRPGE) show a composition bias toward low complexity. Over residues 752-764 (KGSPGADGPAGAP) the composition is skewed to low complexity. Residues 813-823 (PPGPVGPPGLA) are compositionally biased toward pro residues. Residues 825–840 (PPGESGREGSPGAEGS) show a composition bias toward low complexity. K850 carries the 5-hydroxylysine modification. The segment covering 858–873 (PGPPGAPGAPGAPGPV) has biased composition (pro residues). 4-hydroxyproline is present on residues P861, P864, and P867. Residues 894–908 (AGPAGARGPAGPQGP) are compositionally biased toward low complexity. The segment covering 909 to 923 (RGDKGETGEQGDRGI) has biased composition (basic and acidic residues). A 5-hydroxylysine modification is found at K912. Position 924 is a 5-hydroxylysine; alternate (K924). An O-linked (Gal...) hydroxylysine; alternate glycan is attached at K924. A 4-hydroxyproline mark is found at P939, P942, P960, and P975. Over residues 942–975 (PGEQGPSGASGPAGPRGPPGSAGSPGKDGLNGLP) the composition is skewed to low complexity. P980 bears the 3-hydroxyproline mark. The residue at position 981 (P981) is a 4-hydroxyproline. Residues 993–1008 (VGPPGPPGPPGPPGPP) are compositionally biased toward pro residues. P995 bears the 3-hydroxyproline mark. P996 is modified (4-hydroxyproline). Residue P998 is modified to 3-hydroxyproline. At P999 the chain carries 4-hydroxyproline. Residue P1001 is modified to 3-hydroxyproline. Residues P1002, P1005, and P1008 each carry the 4-hydroxyproline modification.

This sequence belongs to the fibrillar collagen family. Trimers of one alpha 2(I) and two alpha 1(I) chains. Post-translationally, contains mostly 4-hydroxyproline. Proline residues at the third position of the tripeptide repeating unit (G-X-Y) are hydroxylated in some or all of the chains. In terms of processing, contains 3-hydroxyproline at a few sites. This modification occurs on the first proline residue in the sequence motif Gly-Pro-Hyp, where Hyp is 4-hydroxyproline. Lysine residues at the third position of the tripeptide repeating unit (G-X-Y) are 5-hydroxylated in some or all of the chains. Post-translationally, O-glycosylated on hydroxylated lysine residues. The O-linked glycan consists of a Glc-Gal disaccharide. Expressed in bones.

The protein localises to the secreted. It localises to the extracellular space. The protein resides in the extracellular matrix. Functionally, type I collagen is a member of group I collagen (fibrillar forming collagen). The chain is Collagen alpha-1(I) chain from Paramylodon harlani (Harlan's ground sloth).